The sequence spans 499 residues: Dipeptide and tripeptide permease A (499 aa).

Topologically, residues 1-34 are cytoplasmic; sequence MSTANKKPAESVSMNAFKQPRSFYLIFSIELWER. Residues 35 to 55 form a helical membrane-spanning segment; that stretch reads FGFYGLQGIMAVYLVKQLGMS. Residues 56-59 lie on the Periplasmic side of the membrane; sequence EADS. Residues 60 to 80 traverse the membrane as a helical segment; sequence ITLFSSFSALVYGLVAIGGWL. The Cytoplasmic portion of the chain corresponds to 81–89; that stretch reads GDKVLGTKR. A helical transmembrane segment spans residues 90–110; sequence VIMLGTIVLAIGYALVAWSGH. Residue aspartate 111 is a topological domain, periplasmic. Residues 112-132 form a helical membrane-spanning segment; the sequence is AAIVYFGMATIAVGNGLFKAN. The Cytoplasmic portion of the chain corresponds to 133 to 153; the sequence is PSALLSTCYEKDDPRLDGAFT. The helical transmembrane segment at 154–174 threads the bilayer; the sequence is MYYMAINIGSFFSMLATPWLA. At 175–178 the chain is on the periplasmic side; it reads EKFG. A helical transmembrane segment spans residues 179 to 199; sequence WSVAFSLSFVGMLITLVNFIF. At 200–217 the chain is on the cytoplasmic side; sequence CKKWVKDYGSKPDFAPLH. A helical transmembrane segment spans residues 218–238; sequence VGKLLATIVGIVVLVAIATWL. The Periplasmic segment spans residues 239–246; the sequence is LHNQGIAR. A helical transmembrane segment spans residues 247 to 267; sequence LVLGVVALGIVIIFAKEAFAM. Over 268–274 the chain is Cytoplasmic; it reads QGAARRK. Residues 275–295 traverse the membrane as a helical segment; sequence MIVAFILMLEAIVFFVLYQQM. Residues 296–320 lie on the Periplasmic side of the membrane; it reads PTSLNFFAIRNVEHSILGIAFQPEQ. A helical transmembrane segment spans residues 321–341; the sequence is FQALNPFWIMIGSPILAAIYN. Residues 342–350 lie on the Cytoplasmic side of the membrane; that stretch reads KMGDRLPMP. A helical transmembrane segment spans residues 351 to 371; the sequence is FKFTIGMLLCSGAFLVLPLGA. At 372-383 the chain is on the periplasmic side; the sequence is KFASEAGIVSVN. Residues 384 to 404 form a helical membrane-spanning segment; sequence WLILSYALQSIGELMISGLGL. The Cytoplasmic segment spans residues 405–414; it reads AMVAQLVPQR. A helical membrane pass occupies residues 415 to 435; sequence LMGFIMGSWFLTTAGAAMIAG. Residues 436-459 lie on the Periplasmic side of the membrane; the sequence is KVANLMAVPENVSDPLQSLEVYGR. The helical transmembrane segment at 460–480 threads the bilayer; it reads VFMQIGIATGVIAVLMLLTAP. Topologically, residues 481–499 are cytoplasmic; that stretch reads LLNRMTQEDKPKETDTAHA.

It belongs to the major facilitator superfamily. Proton-dependent oligopeptide transporter (POT/PTR) (TC 2.A.17) family. DtpA subfamily.

Its subcellular location is the cell inner membrane. Proton-dependent permease that transports di- and tripeptides. The polypeptide is Dipeptide and tripeptide permease A (Cronobacter turicensis (strain DSM 18703 / CCUG 55852 / LMG 23827 / z3032)).